The primary structure comprises 385 residues: Tryptophan--tRNA ligase (385 aa).

Positions 82–90 match the 'HIGH' region motif; that stretch reads PSGPMHIGH. The 'KMSKS' region signature appears at 253 to 257; that stretch reads KMSAS.

The protein belongs to the class-I aminoacyl-tRNA synthetase family.

The protein resides in the cytoplasm. The catalysed reaction is tRNA(Trp) + L-tryptophan + ATP = L-tryptophyl-tRNA(Trp) + AMP + diphosphate + H(+). This chain is Tryptophan--tRNA ligase, found in Pyrococcus furiosus (strain ATCC 43587 / DSM 3638 / JCM 8422 / Vc1).